A 1405-amino-acid chain; its full sequence is Rho guanine nucleotide exchange factor 18 (1405 aa).

Disordered stretches follow at residues 1 to 47 (MGSE…EDGF), 92 to 115 (ETHR…ALPQ), and 289 to 330 (PGKS…PGKR). 2 stretches are compositionally biased toward basic and acidic residues: residues 92–103 (ETHRQEARRESS) and 308–330 (RQKE…PGKR). The C2H2-type; degenerate zinc finger occupies 347-372 (SSCPLCGEPLLNSASLKEHPRTTLLS). Residues 485–682 (KRQDVLYELM…KDIISQVDAK (198 aa)) enclose the DH domain. The PH domain occupies 723–825 (QLHLEGALCW…WMAHIRRAVE (103 aa)). The tract at residues 936 to 1016 (QVEEGSVSAG…PQAVEMPSTE (81 aa)) is disordered. Thr-952 is modified (phosphothreonine). A Phosphoserine modification is found at Ser-961. Positions 1084–1181 (FEKQREERAG…RERLELLRRF (98 aa)) form a coiled coil. Disordered regions lie at residues 1198–1242 (EAQP…VERP), 1274–1309 (RQTA…WESS), and 1328–1405 (ESAS…VIFF). A phosphoserine mark is found at Ser-1336 and Ser-1338. A compositionally biased stretch (pro residues) spans 1355 to 1365 (FPAPSPAPAAT). Positions 1375–1394 (TSLPPVSPASSLPTTPLATT) are enriched in low complexity. Residues 1396–1405 (EVSKEDVIFF) show a composition bias toward basic and acidic residues.

Interacts with SEPT9; interaction may inhibit GEF activity. Interacts with Gbetagamma subunits GNB1 and GNG2. Interacts with EPB41L4B. Interacts with PATJ (via C-terminus).

It localises to the cytoplasm. The protein resides in the cytoskeleton. It is found in the cell membrane. The protein localises to the apical cell membrane. Functionally, acts as a guanine nucleotide exchange factor (GEF) for RhoA GTPases. May play a role in actin cytoskeleton reorganization in different tissues since its activation induces formation of actin stress fibers. Also acts as a GEF for RAC1, inducing production of reactive oxygen species (ROS). Does not act as a GEF for CDC42. The G protein beta-gamma (Gbetagamma) subunits of heterotrimeric G proteins act as activators, explaining the integrated effects of LPA and other G-protein coupled receptor agonists on actin stress fiber formation, cell shape change and ROS production. Required for EPB41L4B-mediated regulation of the circumferential actomyosin belt in epithelial cells. This Mus musculus (Mouse) protein is Rho guanine nucleotide exchange factor 18 (Arhgef18).